The following is an 812-amino-acid chain: Phospholipase D alpha 1 (812 aa).

A C2 domain is found at 1 to 130; sequence MAQILLHGTL…LGGEEIDKWL (130 aa). Residue Asp190 participates in Ca(2+) binding. Residues 330–368 enclose the PLD phosphodiesterase 1 domain; that stretch reads TMFTHHQKIVVVDHEMPNQGSQQRRIVSFIGGIDLCDGR. Active-site residues include His335, Lys337, and Asp342. His335 serves as a coordination point for a 1,2-diacyl-sn-glycero-3-phosphate. Ca(2+) is bound by residues His374 and His408. A 1,2-diacyl-sn-glycero-3-phosphate is bound by residues Gln524 and His663. The PLD phosphodiesterase 2 domain occupies 658–685; that stretch reads FMIYVHTKMMIVDDEYIIIGSANINQRS. Active-site residues include His663, Lys665, and Asp670. Glu724 contacts Ca(2+).

This sequence belongs to the phospholipase D family. C2-PLD subfamily. In terms of assembly, monomer. Ca(2+) is required as a cofactor.

The catalysed reaction is a 1,2-diacyl-sn-glycero-3-phosphocholine + H2O = a 1,2-diacyl-sn-glycero-3-phosphate + choline + H(+). Its function is as follows. Hydrolyzes glycerol-phospholipids at the terminal phosphodiesteric bond. Plays an important role in various cellular processes. The chain is Phospholipase D alpha 1 (PLD1) from Zea mays (Maize).